A 185-amino-acid chain; its full sequence is Folate transporter FolT (185 aa).

A run of 4 helical transmembrane segments spans residues 34–54 (LTVG…SLIA), 64–84 (LIAA…AFFV), 114–134 (VAVG…WLVM), and 157–177 (LIMF…QVIS).

As to quaternary structure, in E.coli forms a stable energy-coupling factor (ECF) transporter complex probably composed of a membrane-embedded substrate-binding protein (S component), two ATP-binding proteins (A components) and a transmembrane protein (T component).

It is found in the cell membrane. Functionally, folate-binding protein that interacts with the energy-coupling factor (ECF) ABC-transporter complex. Unlike classic ABC transporters this ECF transporter provides the energy necessary to transport a number of different substrates. The substrates themselves are bound by transmembrane, not extracytoplasmic soluble proteins. Upon coexpression with EcfA1A2T in E.coli allows 5-formyltetrahydrofolate uptake; uptake requires both FolT and EcfA1A2T. The protein is Folate transporter FolT (folT) of Leuconostoc mesenteroides subsp. mesenteroides (strain ATCC 8293 / DSM 20343 / BCRC 11652 / CCM 1803 / JCM 6124 / NCDO 523 / NBRC 100496 / NCIMB 8023 / NCTC 12954 / NRRL B-1118 / 37Y).